The primary structure comprises 180 residues: Large ribosomal subunit protein uL15 (180 aa).

The disordered stretch occupies residues 1–62; it reads MKKERLEQAA…KTAGRGSKGQ (62 aa). The span at 35 to 44 shows a compositional bias: basic residues; the sequence is GAKKEKKRVG.

The protein belongs to the universal ribosomal protein uL15 family. Part of the 50S ribosomal subunit.

Functionally, binds to the 23S rRNA. This is Large ribosomal subunit protein uL15 from Leptospira borgpetersenii serovar Hardjo-bovis (strain JB197).